We begin with the raw amino-acid sequence, 248 residues long: Probable transcriptional regulatory protein HCH_04926 (248 aa).

It belongs to the TACO1 family.

It localises to the cytoplasm. In Hahella chejuensis (strain KCTC 2396), this protein is Probable transcriptional regulatory protein HCH_04926.